Here is a 913-residue protein sequence, read N- to C-terminus: Protein translocase subunit SecA (913 aa).

Residues Q87, G105 to T109, and D512 each bind ATP. Zn(2+)-binding residues include C897, C899, C908, and H909.

Belongs to the SecA family. Monomer and homodimer. Part of the essential Sec protein translocation apparatus which comprises SecA, SecYEG and auxiliary proteins SecDF-YajC and YidC. It depends on Zn(2+) as a cofactor.

The protein localises to the cell inner membrane. Its subcellular location is the cytoplasm. It carries out the reaction ATP + H2O + cellular proteinSide 1 = ADP + phosphate + cellular proteinSide 2.. Functionally, part of the Sec protein translocase complex. Interacts with the SecYEG preprotein conducting channel. Has a central role in coupling the hydrolysis of ATP to the transfer of proteins into and across the cell membrane, serving both as a receptor for the preprotein-SecB complex and as an ATP-driven molecular motor driving the stepwise translocation of polypeptide chains across the membrane. The polypeptide is Protein translocase subunit SecA (Pseudomonas fluorescens (strain ATCC BAA-477 / NRRL B-23932 / Pf-5)).